The primary structure comprises 732 residues: Polyribonucleotide nucleotidyltransferase (732 aa).

Mg(2+) is bound by residues Asp-503 and Asp-509. Residues 570–629 (PRLTSIQIPVDAIGLIIGKGGETIRSITEETGAEINIEDDGTVTIACSSPEGTNAAVETI) enclose the KH domain. An S1 motif domain is found at 639–713 (GNTYLGKVRD…GKNRFALSIK (75 aa)). A disordered region spans residues 710–732 (LSIKAVESEPEKSDENKAGTEGN). Residues 715 to 732 (VESEPEKSDENKAGTEGN) are compositionally biased toward basic and acidic residues.

The protein belongs to the polyribonucleotide nucleotidyltransferase family. Mg(2+) is required as a cofactor.

It localises to the cytoplasm. The catalysed reaction is RNA(n+1) + phosphate = RNA(n) + a ribonucleoside 5'-diphosphate. Functionally, involved in mRNA degradation. Catalyzes the phosphorolysis of single-stranded polyribonucleotides processively in the 3'- to 5'-direction. The sequence is that of Polyribonucleotide nucleotidyltransferase from Chlorobium phaeobacteroides (strain DSM 266 / SMG 266 / 2430).